The following is a 101-amino-acid chain: Protein S100-A7 (101 aa).

N-acetylserine is present on serine 2. EF-hand domains are found at residues glutamine 8–asparagine 42 and arginine 50–aspartate 85. Zn(2+)-binding residues include histidine 18 and aspartate 25. Residues aspartate 63, asparagine 65, aspartate 67, lysine 69, and glutamate 74 each coordinate Ca(2+). Residues histidine 87 and histidine 91 each contribute to the Zn(2+) site.

This sequence belongs to the S-100 family. As to quaternary structure, interacts with RANBP9.

Its subcellular location is the cytoplasm. It localises to the secreted. This Bos taurus (Bovine) protein is Protein S100-A7 (S100A7).